The sequence spans 488 residues: MWESKFAKESLTFDDVLLIPAQSDILPKDVDLSVQLSDKAKLNIPVISAGMDTVTESKMAIAMARQGGLGVIHKNMGVEEQADEVQKVKRSENGVISNPFFLTPEESVYEAEALMGKYRISGVPIVDNKEDRNLVGILTNRDLRFIEDFSIKIVDVMTQENLITAPVNTTLEEAEKILQKHKIEKLPLVKDGRLEGLITIKDIEKVIEFPNAAKDEHGRLLVAAAIGISKDTDIRAQKLVEAGVDVLVIDTAHGHSKGVIDQVKHIKKTYPEITLVAGNVATAEATKDLFEAGADIVKVGIGPGSICTTRVVAGVGVPQITAIYDCATEARKHGKAIIADGGIKFSGDIIKALAAGGHAVMLGSLLAGTEESPGATEIFQGRQYKVYRGMGSLGAMEKGSNDRYFQEDKAPKKFVPEGIEGRTAYKGALQDTIYQLMGGVRAGMGYTGSHDLRELREEAQFTRMGPAGLAESHPHNIQITKESPNYSF.

2 CBS domains span residues Val95–Ile153 and Met157–Glu216. NAD(+)-binding positions include Asp250 and Gly300–Gly302. K(+) is bound by residues Gly302 and Gly304. Ser305 lines the IMP pocket. Cys307 is a K(+) binding site. The active-site Thioimidate intermediate is Cys307. IMP contacts are provided by residues Asp340–Gly342, Gly363–Ser364, and Tyr387–Gly391. Residue Arg403 is the Proton acceptor of the active site. Position 417 (Glu417) interacts with IMP. The disordered stretch occupies residues Gly468 to Phe488. K(+) contacts are provided by Glu471, Ser472, and His473. Positions His475–Phe488 are enriched in polar residues.

Belongs to the IMPDH/GMPR family. As to quaternary structure, homotetramer. It depends on K(+) as a cofactor.

It catalyses the reaction IMP + NAD(+) + H2O = XMP + NADH + H(+). The protein operates within purine metabolism; XMP biosynthesis via de novo pathway; XMP from IMP: step 1/1. Its activity is regulated as follows. Mycophenolic acid (MPA) is a non-competitive inhibitor that prevents formation of the closed enzyme conformation by binding to the same site as the amobile flap. In contrast, mizoribine monophosphate (MZP) is a competitive inhibitor that induces the closed conformation. MPA is a potent inhibitor of mammalian IMPDHs but a poor inhibitor of the bacterial enzymes. MZP is a more potent inhibitor of bacterial IMPDH. Catalyzes the conversion of inosine 5'-phosphate (IMP) to xanthosine 5'-phosphate (XMP), the first committed and rate-limiting step in the de novo synthesis of guanine nucleotides, and therefore plays an important role in the regulation of cell growth. The polypeptide is Inosine-5'-monophosphate dehydrogenase (Staphylococcus aureus (strain MW2)).